The primary structure comprises 73 residues: Mu-conotoxin SIIIA (73 aa).

The first 20 residues, M1–A20, serve as a signal peptide directing secretion. The disordered stretch occupies residues A20–I40. Residues L21–D49 constitute a propeptide that is removed on maturation. Residues P28–I40 are compositionally biased toward basic and acidic residues. Q52 bears the Pyrrolidone carboxylic acid mark. 3 disulfides stabilise this stretch: C54/C64, C55/C70, and C59/C71. C71 carries the post-translational modification Cysteine amide.

Belongs to the conotoxin M superfamily. In terms of tissue distribution, expressed by the venom duct.

The protein resides in the secreted. Functionally, mu-conotoxins block voltage-gated sodium channels (Nav). This toxin moderately blocks rNav1.1/SCN1A, rNav1.2/SCN2A, rNav1.3/SCN3A, rNav1.4/SCN4A, and mNav1.6/SCN8A. This Conus striatus (Striated cone) protein is Mu-conotoxin SIIIA.